The chain runs to 372 residues: Putative glutamate--cysteine ligase 2 (372 aa).

Belongs to the glutamate--cysteine ligase type 2 family. YbdK subfamily. In terms of assembly, homodimer.

The catalysed reaction is L-cysteine + L-glutamate + ATP = gamma-L-glutamyl-L-cysteine + ADP + phosphate + H(+). Its function is as follows. ATP-dependent carboxylate-amine ligase which exhibits weak glutamate--cysteine ligase activity. The protein is Putative glutamate--cysteine ligase 2 (ybdK) of Escherichia coli (strain K12 / MC4100 / BW2952).